The primary structure comprises 204 residues: Small ribosomal subunit protein eS8 (204 aa).

The protein belongs to the eukaryotic ribosomal protein eS8 family.

This is Small ribosomal subunit protein eS8 (RPS8) from Griffithsia japonica (Red alga).